The following is a 220-amino-acid chain: MAYRDQPLGELALSIPRASALFRQYDMDYCCGGKQTLARAAARHDVDIDIIEAQLAQLAEQPIEKDWRAVPLADIIDHIVVRYHDRHREQLPELILQATKVERVHADKPNVPRGLTKYLTALHEELSSHMMKEEQILFPMIKQGMGRQATGPISVMEIEHDEAGELVDVIKHVTQNVTPPPEACTTWKAMYNGINEMIDDLMEHISLENNVLFPRALAGE.

Belongs to the RIC family. YtfE subfamily. Homodimer.

It is found in the cytoplasm. Di-iron-containing protein involved in the repair of iron-sulfur clusters damaged by oxidative and nitrosative stress conditions. The polypeptide is Iron-sulfur cluster repair protein YtfE (Salmonella schwarzengrund (strain CVM19633)).